The sequence spans 239 residues: tRNA (guanine-N(1)-)-methyltransferase (239 aa).

S-adenosyl-L-methionine is bound by residues G112 and 131-136 (LGDFIL).

This sequence belongs to the RNA methyltransferase TrmD family. In terms of assembly, homodimer.

Its subcellular location is the cytoplasm. It catalyses the reaction guanosine(37) in tRNA + S-adenosyl-L-methionine = N(1)-methylguanosine(37) in tRNA + S-adenosyl-L-homocysteine + H(+). In terms of biological role, specifically methylates guanosine-37 in various tRNAs. The protein is tRNA (guanine-N(1)-)-methyltransferase of Clostridium tetani (strain Massachusetts / E88).